The chain runs to 187 residues: dTTP/UTP pyrophosphatase (187 aa).

Aspartate 72 serves as the catalytic Proton acceptor.

Belongs to the Maf family. YhdE subfamily. The cofactor is a divalent metal cation.

The protein resides in the cytoplasm. It catalyses the reaction dTTP + H2O = dTMP + diphosphate + H(+). The enzyme catalyses UTP + H2O = UMP + diphosphate + H(+). Its function is as follows. Nucleoside triphosphate pyrophosphatase that hydrolyzes dTTP and UTP. May have a dual role in cell division arrest and in preventing the incorporation of modified nucleotides into cellular nucleic acids. The chain is dTTP/UTP pyrophosphatase from Vibrio cholerae serotype O1 (strain ATCC 39315 / El Tor Inaba N16961).